The chain runs to 201 residues: Small ribosomal subunit protein uS4 (201 aa).

The region spanning 91-157 (SRLDNVIYRA…VPFQIARETV (67 aa)) is the S4 RNA-binding domain.

The protein belongs to the universal ribosomal protein uS4 family. In terms of assembly, part of the 30S ribosomal subunit. Contacts protein S5. The interaction surface between S4 and S5 is involved in control of translational fidelity.

One of the primary rRNA binding proteins, it binds directly to 16S rRNA where it nucleates assembly of the body of the 30S subunit. Its function is as follows. With S5 and S12 plays an important role in translational accuracy. This Mycobacterium leprae (strain Br4923) protein is Small ribosomal subunit protein uS4.